Here is a 418-residue protein sequence, read N- to C-terminus: Endoglucanase EG-II (418 aa).

A signal peptide spans 1–21 (MNKSVAPLLLAASILYGGAVA). Gln-22 is subject to Pyrrolidone carboxylic acid. Residues 22–57 (QQTVWGQCGGIGWSGPTNCAPGSACSTLNPYYAQCI) enclose the CBM1 domain. The linker stretch occupies residues 58–91 (PGATTITTSTRPPSGPTTTTRATSTSSSTPPTSS). Residues 63 to 91 (ITTSTRPPSGPTTTTRATSTSSSTPPTSS) form a disordered region. The interval 92–418 (GVRFAGVNIA…SLVSSCLARK (327 aa)) is catalytic. A disulfide bond links Cys-107 and Cys-113. An N-linked (GlcNAc) asparagine glycan is attached at Asn-124. Cysteines 183 and 190 form a disulfide. Residue Glu-239 is the Proton donor/acceptor of the active site. 2 cysteine pairs are disulfide-bonded: Cys-323–Cys-359 and Cys-364–Cys-414. Catalysis depends on Glu-350, which acts as the Nucleophile.

The protein belongs to the glycosyl hydrolase 5 (cellulase A) family.

Its subcellular location is the secreted. The enzyme catalyses Endohydrolysis of (1-&gt;4)-beta-D-glucosidic linkages in cellulose, lichenin and cereal beta-D-glucans.. In terms of biological role, endoglucanase (EG) that cleaves the internal beta-1,4-glucosidic bonds in cellulose. The degradation of cellulose involves an interplay between different cellulolytic enzymes. Hydrolysis starts with EGs, which cut internal glycosidic linkages to reduce the polymerization degree of the substrate and creates new chain ends for exocellobiohydrolases (CBHs). The CBH release the disaccharide cellobiose from the non-reducing end of the cellulose polymer chain. Finally, beta-1,4-glucosidases hydrolyze the cellobiose and other short cello-oligosaccharides into glucose units. The polypeptide is Endoglucanase EG-II (egl2) (Hypocrea jecorina (Trichoderma reesei)).